The chain runs to 392 residues: Cytochrome P450 monooxygenase ppzE (392 aa).

Residues 10–30 traverse the membrane as a helical segment; that stretch reads LELVWFVALYPFACWTLFAVL. N-linked (GlcNAc...) asparagine glycosylation occurs at N319. Residue C353 participates in heme binding. Residue N372 is glycosylated (N-linked (GlcNAc...) asparagine).

The protein belongs to the cytochrome P450 family. Heme serves as cofactor.

Its subcellular location is the membrane. The protein operates within secondary metabolite biosynthesis. Cytochrome P450 monooxygenase; part of the gene cluster that mediates the biosynthesis of pyrrolopyrazines, secondary metabolites showing insecticidal activity. The role of ppzE within the pathway has still to be determined. The single multifunctional NRPS ppzA is sufficient to produce peramine via condensation of 1-pyrroline-5-carboxylate and arginine, N-methylation of the alpha-amino group of arginine and reduction of the thioester and the cyclization to form an iminium ion resulting in release from the peptide synthetase. Deprotonation of this intermediate and oxidation of the pyrroline ring would give rise to peramine. In Epichloe species that produce only peramine, the peramine synthetase gene is not localized in a gene cluster, in contrast to Metarhizium species that contain additional pyrrolopyrazine biosynthesis genes. The 2-oxoglutarate-Fe(II) type oxidoreductase ppzC hydroxylates peramine to yield the newly identified compound 8-hydroxyperamine whereas ppzD converts L-proline into trans-4-hydroxy-L-proline, a precursor of peramine biosynthesis. The polypeptide is Cytochrome P450 monooxygenase ppzE (Metarhizium rileyi (strain RCEF 4871) (Nomuraea rileyi)).